The primary structure comprises 257 residues: MSFFLTTPTAIDLGVNIDHVATLRNARGTAYPDPVRAALAAEDAGADAITLHLREDRRHIVDADVRALRPRVKTRMNLECAVTPEMLDIACEIRPHDACLVPEKRSELTTEGGLDVVGHFDAVRAACKQLADAGVRVSLFIDPDEAQIRAAHETGAPVIELHTGRYADAHDAAEQQREFERIATGVDAGIALGLKVNAGHGLHYTNVQAIAALPGIAELNIGHAIVAHAVFVGWDNAVREMKAIMVAARVAALHGGR.

Asparagine 16 provides a ligand contact to 3-amino-2-oxopropyl phosphate. 18 to 19 contributes to the 1-deoxy-D-xylulose 5-phosphate binding site; that stretch reads DH. Arginine 27 lines the 3-amino-2-oxopropyl phosphate pocket. Residue histidine 52 is the Proton acceptor of the active site. 1-deoxy-D-xylulose 5-phosphate-binding residues include arginine 54 and histidine 59. Glutamate 79 serves as the catalytic Proton acceptor. Threonine 109 lines the 1-deoxy-D-xylulose 5-phosphate pocket. Histidine 200 (proton donor) is an active-site residue. Residues glycine 201 and 222–223 each bind 3-amino-2-oxopropyl phosphate; that span reads GH.

This sequence belongs to the PNP synthase family. As to quaternary structure, homooctamer; tetramer of dimers.

The protein localises to the cytoplasm. The catalysed reaction is 3-amino-2-oxopropyl phosphate + 1-deoxy-D-xylulose 5-phosphate = pyridoxine 5'-phosphate + phosphate + 2 H2O + H(+). The protein operates within cofactor biosynthesis; pyridoxine 5'-phosphate biosynthesis; pyridoxine 5'-phosphate from D-erythrose 4-phosphate: step 5/5. In terms of biological role, catalyzes the complicated ring closure reaction between the two acyclic compounds 1-deoxy-D-xylulose-5-phosphate (DXP) and 3-amino-2-oxopropyl phosphate (1-amino-acetone-3-phosphate or AAP) to form pyridoxine 5'-phosphate (PNP) and inorganic phosphate. The polypeptide is Pyridoxine 5'-phosphate synthase (Burkholderia pseudomallei (strain K96243)).